The sequence spans 132 residues: 3'-dehydrocarminate deglycosidase beta subunit (132 aa).

This sequence belongs to the C-glycoside deglycosidase beta subunit family. In terms of assembly, heterodimer composed of an alpha subunit (CarB) and a beta subunit (CarC). Mg(2+) is required as a cofactor.

It catalyses the reaction 3'-dehydrocarminate + H(+) = kermesate + 1,5-anhydro-D-erythro-hex-1-en-3-ulose. With respect to regulation, activity is strongly reduced in the presence of chelating agents. Functionally, carbon-carbon bond-cleaving enzyme which participates in a carminate degradation pathway. Cleaves the C-C bond in 3'-dehydrocarminate to form kermesate. Also shows weak activity with other C-glycosides, such as 3''-dehydropuerarin (3''-oxo-puerarin), 3''-dehydroisoorientin (3''-oxo-homoorientin) and 3'-dehydromangiferin (3'-oxo-mangiferin). This chain is 3'-dehydrocarminate deglycosidase beta subunit, found in Microbacterium sp.